The chain runs to 45 residues: Cytochrome b559 subunit beta (45 aa).

A helical transmembrane segment spans residues 20 to 36; that stretch reads WIAVHTLAVPTVFFLGA. Histidine 24 serves as a coordination point for heme.

It belongs to the PsbE/PsbF family. Heterodimer of an alpha subunit and a beta subunit. PSII is composed of 1 copy each of membrane proteins PsbA, PsbB, PsbC, PsbD, PsbE, PsbF, PsbH, PsbI, PsbJ, PsbK, PsbL, PsbM, PsbT, PsbX, PsbY, PsbZ, Psb30/Ycf12, peripheral proteins PsbO, CyanoQ (PsbQ), PsbU, PsbV and a large number of cofactors. It forms dimeric complexes. It depends on heme b as a cofactor.

It localises to the cellular thylakoid membrane. Its function is as follows. This b-type cytochrome is tightly associated with the reaction center of photosystem II (PSII). PSII is a light-driven water:plastoquinone oxidoreductase that uses light energy to abstract electrons from H(2)O, generating O(2) and a proton gradient subsequently used for ATP formation. It consists of a core antenna complex that captures photons, and an electron transfer chain that converts photonic excitation into a charge separation. The protein is Cytochrome b559 subunit beta of Nostoc sp. (strain PCC 7120 / SAG 25.82 / UTEX 2576).